Consider the following 181-residue polypeptide: ECF RNA polymerase sigma factor EcfG (181 aa).

The sigma-70 factor domain-2 stretch occupies residues 15–77 (VPSLRAFAIS…FRSDYRKRRR (63 aa)). The segment at 103 to 155 (EEFRAALDKLPQDQREALILVGASGFSYEDAAAICGCAVGTIKSRVNRARSKL) is sigma-70 factor domain-4.

Belongs to the sigma-70 factor family. ECF subfamily.

Functionally, sigma factors are initiation factors that promote the attachment of RNA polymerase to specific initiation sites and are then released. Regulates expression of hpnP under a variety of stresses, including high temperature, pH stress, and presence of nonionic osmolytes. This chain is ECF RNA polymerase sigma factor EcfG, found in Rhodopseudomonas palustris (strain TIE-1).